The sequence spans 138 residues: Large ribosomal subunit protein uL16c (138 aa).

Belongs to the universal ribosomal protein uL16 family. As to quaternary structure, part of the 50S ribosomal subunit.

It localises to the plastid. Its subcellular location is the chloroplast. The polypeptide is Large ribosomal subunit protein uL16c (Chaetosphaeridium globosum (Charophycean green alga)).